Consider the following 351-residue polypeptide: Prostaglandin reductase 2 (351 aa).

99 to 100 (FY) is a substrate binding site. NADP(+) is bound by residues 165–168 (GACG), Lys-192, Tyr-208, Asn-231, 253–259 (CGQISQY), 287–289 (FLV), and Asn-337. Residue 288-290 (LVL) coordinates substrate.

It belongs to the NADP-dependent oxidoreductase L4BD family. Monomer. In terms of tissue distribution, widely expressed.

The protein resides in the cytoplasm. It carries out the reaction 13,14-dihydro-15-oxo-prostaglandin E2 + NAD(+) = 15-oxoprostaglandin E2 + NADH + H(+). It catalyses the reaction 13,14-dihydro-15-oxo-prostaglandin E2 + NADP(+) = 15-oxoprostaglandin E2 + NADPH + H(+). The catalysed reaction is 13,14-dihydro-15-oxo-PGF2alpha + NADP(+) = 15-oxoprostaglandin F2alpha + NADPH + H(+). The enzyme catalyses 13,14-dihydro-15-oxo-prostaglandin E1 + NADP(+) = 15-oxoprostaglandin E1 + NADPH + H(+). It carries out the reaction 13,14-dihydro-15-oxo-prostaglandin F1alpha + NADP(+) = 15-oxoprostaglandin F1alpha + NADPH + H(+). Functions as 15-oxo-prostaglandin 13-reductase and acts on 15-keto-PGE1, 15-keto-PGE2, 15-keto-PGE1-alpha and 15-keto-PGE2-alpha with highest activity towards 15-keto-PGE2. Overexpression represses transcriptional activity of PPARG and inhibits adipocyte differentiation. The sequence is that of Prostaglandin reductase 2 from Homo sapiens (Human).